Here is a 368-residue protein sequence, read N- to C-terminus: Putative transport protein bbp_117 (368 aa).

The next 8 membrane-spanning stretches (helical) occupy residues 13–35 (VIFS…RPFF), 39–61 (AWAS…LLWG), 68–90 (VMMT…NSLI), 159–181 (HFGR…YWNG), 216–238 (LGVV…ISGI), 248–270 (IIIF…IWLY), 277–299 (WGTV…RPIL), and 314–336 (GVIG…VLII).

The protein belongs to the autoinducer-2 exporter (AI-2E) (TC 2.A.86) family.

The protein resides in the cell membrane. This chain is Putative transport protein bbp_117, found in Buchnera aphidicola subsp. Baizongia pistaciae (strain Bp).